A 653-amino-acid polypeptide reads, in one-letter code: Intermembrane lipid transfer protein vps13l (653 aa).

A B box-type zinc finger spans residues 5 to 49 (ISELKCQQHDKLVTIYCCACDAYFCKKCDKEKHSQDDNQEDSLHI). Zn(2+) is bound by residues cysteine 10, histidine 13, cysteine 32, and histidine 37. Disordered regions lie at residues 159 to 232 (NLID…NRKK), 248 to 420 (HILN…EDDS), and 627 to 653 (EKSN…PNEN). Over residues 195 to 213 (SPSPSRSSESNSTTNNNNN) the composition is skewed to low complexity. The segment covering 266–277 (DYDDDDDNDDDN) has biased composition (acidic residues). Residues 278–293 (NNNNNNNNNNNNNNNN) are compositionally biased toward low complexity. Residues 314-330 (ETEKEIENVENKIDNKP) are compositionally biased toward basic and acidic residues. A compositionally biased stretch (acidic residues) spans 366–381 (IFEEEEEEEEDEDEVG).

It belongs to the VPS13 family.

It is found in the membrane. Its function is as follows. Mediates the transfer of lipids between membranes at organelle contact sites. This is Intermembrane lipid transfer protein vps13l (vps13l) from Dictyostelium discoideum (Social amoeba).